The following is a 212-amino-acid chain: Large ribosomal subunit protein uL4 (212 aa).

The span at Ser54–Asn65 shows a compositional bias: polar residues. A disordered region spans residues Ser54–Pro85.

It belongs to the universal ribosomal protein uL4 family. As to quaternary structure, part of the 50S ribosomal subunit.

Functionally, one of the primary rRNA binding proteins, this protein initially binds near the 5'-end of the 23S rRNA. It is important during the early stages of 50S assembly. It makes multiple contacts with different domains of the 23S rRNA in the assembled 50S subunit and ribosome. In terms of biological role, forms part of the polypeptide exit tunnel. The polypeptide is Large ribosomal subunit protein uL4 (Blochmanniella floridana).